We begin with the raw amino-acid sequence, 490 residues long: Betaine aldehyde dehydrogenase (490 aa).

Aspartate 93 serves as a coordination point for K(+). 150-152 (GAW) contributes to the NAD(+) binding site. Residue lysine 162 is the Charge relay system of the active site. 176-179 (KPSE) provides a ligand contact to NAD(+). Position 180 (valine 180) interacts with K(+). 230–233 (GIAS) contacts NAD(+). Leucine 246 serves as a coordination point for K(+). Residue glutamate 252 is the Proton acceptor of the active site. NAD(+) is bound by residues glycine 254, cysteine 286, and glutamate 387. The active-site Nucleophile is cysteine 286. The residue at position 286 (cysteine 286) is a Cysteine sulfenic acid (-SOH). K(+) contacts are provided by lysine 457 and glycine 460. Glutamate 464 acts as the Charge relay system in catalysis.

Belongs to the aldehyde dehydrogenase family. Dimer of dimers. K(+) is required as a cofactor.

It catalyses the reaction betaine aldehyde + NAD(+) + H2O = glycine betaine + NADH + 2 H(+). The protein operates within amine and polyamine biosynthesis; betaine biosynthesis via choline pathway; betaine from betaine aldehyde: step 1/1. Functionally, involved in the biosynthesis of the osmoprotectant glycine betaine. Catalyzes the irreversible oxidation of betaine aldehyde to the corresponding acid. This is Betaine aldehyde dehydrogenase from Yersinia pseudotuberculosis serotype IB (strain PB1/+).